We begin with the raw amino-acid sequence, 313 residues long: Putative HTH-type transcriptional regulatory protein Msm_0453 (313 aa).

An HTH cro/C1-type domain is found at 131–189 (IKQYREEYSLSLKDLADLAHVSRATMYKYENEIVRANTETAMILEEILNTKVTLDIDLL). A DNA-binding region (H-T-H motif) is located at residues 142 to 161 (LKDLADLAHVSRATMYKYEN).

The protein is Putative HTH-type transcriptional regulatory protein Msm_0453 of Methanobrevibacter smithii (strain ATCC 35061 / DSM 861 / OCM 144 / PS).